The following is a 241-amino-acid chain: 1-(5-phosphoribosyl)-5-[(5-phosphoribosylamino)methylideneamino] imidazole-4-carboxamide isomerase (241 aa).

D12 functions as the Proton acceptor in the catalytic mechanism. Catalysis depends on D133, which acts as the Proton donor.

It belongs to the HisA/HisF family.

It localises to the cytoplasm. It carries out the reaction 1-(5-phospho-beta-D-ribosyl)-5-[(5-phospho-beta-D-ribosylamino)methylideneamino]imidazole-4-carboxamide = 5-[(5-phospho-1-deoxy-D-ribulos-1-ylimino)methylamino]-1-(5-phospho-beta-D-ribosyl)imidazole-4-carboxamide. It functions in the pathway amino-acid biosynthesis; L-histidine biosynthesis; L-histidine from 5-phospho-alpha-D-ribose 1-diphosphate: step 4/9. This is 1-(5-phosphoribosyl)-5-[(5-phosphoribosylamino)methylideneamino] imidazole-4-carboxamide isomerase from Persephonella marina (strain DSM 14350 / EX-H1).